An 81-amino-acid polypeptide reads, in one-letter code: Small ribosomal subunit protein bS16 (81 aa).

It belongs to the bacterial ribosomal protein bS16 family.

The chain is Small ribosomal subunit protein bS16 from Acetivibrio thermocellus (strain ATCC 27405 / DSM 1237 / JCM 9322 / NBRC 103400 / NCIMB 10682 / NRRL B-4536 / VPI 7372) (Clostridium thermocellum).